The sequence spans 202 residues: Small ribosomal subunit protein uS4 (202 aa).

The disordered stretch occupies residues 23–42 (RKAARRSYPPGQHGQARRKR). Residues 90 to 154 (MRLDNLVFRL…SRKLVTANLE (65 aa)) form the S4 RNA-binding domain.

Belongs to the universal ribosomal protein uS4 family. In terms of assembly, part of the 30S ribosomal subunit. Contacts protein S5. The interaction surface between S4 and S5 is involved in control of translational fidelity.

One of the primary rRNA binding proteins, it binds directly to 16S rRNA where it nucleates assembly of the body of the 30S subunit. Its function is as follows. With S5 and S12 plays an important role in translational accuracy. This Synechococcus elongatus (strain ATCC 33912 / PCC 7942 / FACHB-805) (Anacystis nidulans R2) protein is Small ribosomal subunit protein uS4.